Here is a 115-residue protein sequence, read N- to C-terminus: Putative membrane protein insertion efficiency factor (115 aa).

Belongs to the UPF0161 family.

The protein localises to the cell membrane. In terms of biological role, could be involved in insertion of integral membrane proteins into the membrane. The polypeptide is Putative membrane protein insertion efficiency factor (Mycolicibacterium paratuberculosis (strain ATCC BAA-968 / K-10) (Mycobacterium paratuberculosis)).